The sequence spans 126 residues: Holo-[acyl-carrier-protein] synthase (126 aa).

Residues Asp8 and Glu57 each coordinate Mg(2+).

Belongs to the P-Pant transferase superfamily. AcpS family. The cofactor is Mg(2+).

It is found in the cytoplasm. The catalysed reaction is apo-[ACP] + CoA = holo-[ACP] + adenosine 3',5'-bisphosphate + H(+). Functionally, transfers the 4'-phosphopantetheine moiety from coenzyme A to a Ser of acyl-carrier-protein. This Geobacter sulfurreducens (strain ATCC 51573 / DSM 12127 / PCA) protein is Holo-[acyl-carrier-protein] synthase.